The following is a 188-amino-acid chain: Ribosome-recycling factor (188 aa).

Belongs to the RRF family.

It is found in the cytoplasm. Its function is as follows. Responsible for the release of ribosomes from messenger RNA at the termination of protein biosynthesis. May increase the efficiency of translation by recycling ribosomes from one round of translation to another. The sequence is that of Ribosome-recycling factor from Cereibacter sphaeroides (strain ATCC 17025 / ATH 2.4.3) (Rhodobacter sphaeroides).